We begin with the raw amino-acid sequence, 461 residues long: Cysteine--tRNA ligase (461 aa).

Cys-30 is a binding site for Zn(2+). The short motif at 32–42 is the 'HIGH' region element; it reads VTIYDLCHIGH. Positions 211, 236, and 240 each coordinate Zn(2+). Positions 268-272 match the 'KMSKS' region motif; the sequence is KMSKS. Lys-271 lines the ATP pocket.

The protein belongs to the class-I aminoacyl-tRNA synthetase family. In terms of assembly, monomer. Zn(2+) serves as cofactor.

It localises to the cytoplasm. The catalysed reaction is tRNA(Cys) + L-cysteine + ATP = L-cysteinyl-tRNA(Cys) + AMP + diphosphate. This Shewanella putrefaciens (strain CN-32 / ATCC BAA-453) protein is Cysteine--tRNA ligase.